Consider the following 61-residue polypeptide: uncharacterized protein (61 aa).

Residues 24–60 (WMRYESERDEKLRMLERMRDELEAELEEIKREIERLR) adopt a coiled-coil conformation.

This is an uncharacterized protein from Archaeoglobus fulgidus (strain ATCC 49558 / DSM 4304 / JCM 9628 / NBRC 100126 / VC-16).